The following is a 441-amino-acid chain: Tubulin beta chain (441 aa).

8 residues coordinate GTP: Gln-11, Glu-69, Ser-138, Gly-142, Thr-143, Gly-144, Asn-204, and Asn-226. Glu-69 is a binding site for Mg(2+).

It belongs to the tubulin family. As to quaternary structure, dimer of alpha and beta chains. A typical microtubule is a hollow water-filled tube with an outer diameter of 25 nm and an inner diameter of 15 nM. Alpha-beta heterodimers associate head-to-tail to form protofilaments running lengthwise along the microtubule wall with the beta-tubulin subunit facing the microtubule plus end conferring a structural polarity. Microtubules usually have 13 protofilaments but different protofilament numbers can be found in some organisms and specialized cells. Mg(2+) serves as cofactor.

The protein resides in the cytoplasm. It localises to the cytoskeleton. In terms of biological role, tubulin is the major constituent of microtubules, a cylinder consisting of laterally associated linear protofilaments composed of alpha- and beta-tubulin heterodimers. Microtubules grow by the addition of GTP-tubulin dimers to the microtubule end, where a stabilizing cap forms. Below the cap, tubulin dimers are in GDP-bound state, owing to GTPase activity of alpha-tubulin. In Babesia bovis, this protein is Tubulin beta chain.